Here is a 1013-residue protein sequence, read N- to C-terminus: MDIS1-interacting receptor like kinase 1 (1013 aa).

Positions 1–23 are cleaved as a signal peptide; that stretch reads MKMKIIVLFLYYCYIGSTSSVLA. At 24–633 the chain is on the extracellular side; it reads SIDNVNELSV…SSHSSLHGKR (610 aa). N61, N82, N101, N137, N146, N151, and N155 each carry an N-linked (GlcNAc...) asparagine glycan. 22 LRR repeats span residues 70 to 94, 95 to 117, 119 to 137, 139 to 163, 164 to 186, 187 to 213, 215 to 234, 235 to 259, 260 to 283, 284 to 307, 308 to 331, 333 to 355, 357 to 379, 381 to 403, 405 to 426, 427 to 451, 453 to 475, 477 to 498, 499 to 523, 525 to 547, 548 to 571, and 573 to 595; these read NGNV…ISQL, SSLV…SIPP, KSID…LFSN, SLGL…LGNL, VSLE…SFKN, LQKL…QLPS, ETAI…EFGN, INSL…LGKL, KSLE…IGSI, TTLK…ITKL, KNLQ…ISSL, QLQV…LGKN, PLQW…LCNK, NLTK…LSTC, SLVR…GFGK, LEKL…ISDS, SLSF…ILSI, NLQA…QFQD, CPSL…IASC, KLVS…ITTM, SALA…IGTS, and ALEL…GFLK. N199 carries N-linked (GlcNAc...) asparagine glycosylation. Residue N271 is glycosylated (N-linked (GlcNAc...) asparagine). N341 is a glycosylation site (N-linked (GlcNAc...) asparagine). Residues N381, N389, and N417 are each glycosylated (N-linked (GlcNAc...) asparagine). N-linked (GlcNAc...) asparagine glycans are attached at residues N535, N557, and N578. A helical membrane pass occupies residues 634–654; sequence IVAGWLIGIASVLALGILTIV. Over 655–1013 the chain is Cytoplasmic; sequence TRTLYKKWYS…FSTSPVNGLL (359 aa). T691 carries the post-translational modification Phosphothreonine. Positions 699 to 983 constitute a Protein kinase domain; the sequence is IKESNMIGMG…SMLGEAKPRR (285 aa). Residues 705–713 and K728 each bind ATP; that span reads IGMGATGIV. T710 carries the post-translational modification Phosphothreonine; by autocatalysis. Phosphothreonine; by autocatalysis is present on residues T741 and T742. Phosphotyrosine is present on residues Y777 and Y818. D831 (proton acceptor) is an active-site residue. T862 is modified (phosphothreonine; by autocatalysis). S864 is modified (phosphoserine; by autocatalysis). Y872 is modified (phosphotyrosine). Y879 is subject to Phosphotyrosine; by autocatalysis. A phosphothreonine; by autocatalysis mark is found at T880 and T992. The tract at residues 976–1013 is disordered; sequence LGEAKPRRKSNSNEENTSRSLAEKHSSVFSTSPVNGLL. The segment covering 1002 to 1013 has biased composition (polar residues); it reads SVFSTSPVNGLL.

It belongs to the protein kinase superfamily. Ser/Thr protein kinase family. Homodimer. Interacts with MDIS1 and LURE1.2. Autophosphorylation induced by the interaction with LURE1.2. Expressed in pollen tubes.

It is found in the cell membrane. The enzyme catalyses L-seryl-[protein] + ATP = O-phospho-L-seryl-[protein] + ADP + H(+). The catalysed reaction is L-threonyl-[protein] + ATP = O-phospho-L-threonyl-[protein] + ADP + H(+). Functionally, involved in the regulation of procambium maintenance and polarity during vascular-tissue development. Involved in the pollen tube perception of the female signal. Phosphorylates MDSI1. In Arabidopsis thaliana (Mouse-ear cress), this protein is MDIS1-interacting receptor like kinase 1.